A 212-amino-acid chain; its full sequence is Eggshell protein 1 (212 aa).

The first 27 residues, 1-27 (MKSSLTLLFLAAIGYTIAYPPPSDYDS), serve as a signal peptide directing secretion. A disordered region spans residues 155-212 (RKNGHGKGGKGGNGGGGGKGGGKGGGNGKGNGKGGGGKNGGGKGGNGGKGGSYAPSYY). A compositionally biased stretch (gly residues) spans 163 to 205 (GKGGNGGGGGKGGGKGGGNGKGNGKGGGGKNGGGKGGNGGKGG).

In terms of tissue distribution, detected only in mature female parasites.

This chain is Eggshell protein 1 (ESG-1), found in Schistosoma japonicum (Blood fluke).